The sequence spans 450 residues: Phosphoglucosamine mutase (450 aa).

Ser101 serves as the catalytic Phosphoserine intermediate. Ser101, Asp242, Asp244, and Asp246 together coordinate Mg(2+). Position 101 is a phosphoserine (Ser101).

It belongs to the phosphohexose mutase family. The cofactor is Mg(2+). Activated by phosphorylation.

The enzyme catalyses alpha-D-glucosamine 1-phosphate = D-glucosamine 6-phosphate. Functionally, catalyzes the conversion of glucosamine-6-phosphate to glucosamine-1-phosphate. The sequence is that of Phosphoglucosamine mutase from Rhodopseudomonas palustris (strain ATCC BAA-98 / CGA009).